Consider the following 402-residue polypeptide: Zinc finger protein 322 (402 aa).

The C2H2-type 1; atypical zinc-finger motif lies at 43–65; the sequence is YQCLECKQNFCENLALIMCERTH. 8 consecutive C2H2-type zinc fingers follow at residues 71-93, 99-121, 127-149, 155-177, 183-205, 211-233, 239-261, and 267-289; these read YKCD…QRIH, YKCS…QRTH, YTCD…QRSH, YLCS…RRTH, FKCL…QRTH, YKCN…KRVH, YKCG…QRVH, and YKCL…QATH. The C2H2-type 10; degenerate zinc finger occupies 293-315; that stretch reads FKCLEYEKSFNCSSDLIVHQRIH. The C2H2-type 11; degenerate zinc finger occupies 351–373; that stretch reads YKYTVCDKSFHQSSALLQHQTVH. A Phosphoserine modification is found at Ser391.

This sequence belongs to the krueppel C2H2-type zinc-finger protein family. As to quaternary structure, interacts with POU5F1. Ubiquitous. Highly expressed in heart and skeletal muscle.

It is found in the cytoplasm. The protein resides in the nucleus. Its function is as follows. Transcriptional activator. Important for maintenance of pluripotency in embryonic stem cells. Binds directly to the POU5F1 distal enhancer and the NANOG proximal promoter, and enhances expression of both genes. Can also bind to numerous other gene promoters and regulates expression of many other pluripotency factors, either directly or indirectly. Promotes inhibition of MAPK signaling during embryonic stem cell differentiation. The chain is Zinc finger protein 322 (ZNF322) from Homo sapiens (Human).